A 381-amino-acid chain; its full sequence is 4-hydroxy-3-methylbut-2-en-1-yl diphosphate synthase (flavodoxin) (381 aa).

4 residues coordinate [4Fe-4S] cluster: cysteine 280, cysteine 283, cysteine 315, and glutamate 322.

Belongs to the IspG family. The cofactor is [4Fe-4S] cluster.

The catalysed reaction is (2E)-4-hydroxy-3-methylbut-2-enyl diphosphate + oxidized [flavodoxin] + H2O + 2 H(+) = 2-C-methyl-D-erythritol 2,4-cyclic diphosphate + reduced [flavodoxin]. It functions in the pathway isoprenoid biosynthesis; isopentenyl diphosphate biosynthesis via DXP pathway; isopentenyl diphosphate from 1-deoxy-D-xylulose 5-phosphate: step 5/6. In terms of biological role, converts 2C-methyl-D-erythritol 2,4-cyclodiphosphate (ME-2,4cPP) into 1-hydroxy-2-methyl-2-(E)-butenyl 4-diphosphate. This Clavibacter michiganensis subsp. michiganensis (strain NCPPB 382) protein is 4-hydroxy-3-methylbut-2-en-1-yl diphosphate synthase (flavodoxin).